Here is an 833-residue protein sequence, read N- to C-terminus: Leucine--tRNA ligase (833 aa).

A 'HIGH' region motif is present at residues 41–52 (PYPSGAGLHVGH). The 'KMSKS' region signature appears at 610–614 (KMSKS). Residue lysine 613 participates in ATP binding.

It belongs to the class-I aminoacyl-tRNA synthetase family.

The protein resides in the cytoplasm. The catalysed reaction is tRNA(Leu) + L-leucine + ATP = L-leucyl-tRNA(Leu) + AMP + diphosphate. This chain is Leucine--tRNA ligase, found in Streptococcus pyogenes serotype M28 (strain MGAS6180).